The sequence spans 204 residues: Dual-action ribosomal maturation protein DarP (204 aa).

2 disordered regions span residues 1–31 (MPPMTRKTRIQPIEPVAEEDDNGYDRPSKSQ) and 182–204 (GGASDSDDEAADDAGDDHDDDEA). Residues 186-204 (DSDDEAADDAGDDHDDDEA) are compositionally biased toward acidic residues.

The protein belongs to the DarP family.

The protein localises to the cytoplasm. Its function is as follows. Member of a network of 50S ribosomal subunit biogenesis factors which assembles along the 30S-50S interface, preventing incorrect 23S rRNA structures from forming. Promotes peptidyl transferase center (PTC) maturation. The polypeptide is Dual-action ribosomal maturation protein DarP (Burkholderia orbicola (strain MC0-3)).